A 488-amino-acid chain; its full sequence is Glutamate--tRNA ligase (488 aa).

The 'HIGH' region motif lies at 16–26 (PSPTGEPHVGT). The 'KMSKS' region motif lies at 257–261 (KLSKR). Lysine 260 contacts ATP.

This sequence belongs to the class-I aminoacyl-tRNA synthetase family. Glutamate--tRNA ligase type 1 subfamily. Monomer.

The protein resides in the cytoplasm. It catalyses the reaction tRNA(Glu) + L-glutamate + ATP = L-glutamyl-tRNA(Glu) + AMP + diphosphate. In terms of biological role, catalyzes the attachment of glutamate to tRNA(Glu) in a two-step reaction: glutamate is first activated by ATP to form Glu-AMP and then transferred to the acceptor end of tRNA(Glu). The chain is Glutamate--tRNA ligase from Rhizobium johnstonii (strain DSM 114642 / LMG 32736 / 3841) (Rhizobium leguminosarum bv. viciae).